A 362-amino-acid chain; its full sequence is Protein Tob1 (362 aa).

The Bipartite nuclear localization signal motif lies at 22–39 (RRRVNIFGEELERLLKKK). The tract at residues 82 to 92 (VRGNLPQDLSV) is important for nuclear localization. Residues 144–160 (DPASSVSSSPSPPFGHS) show a composition bias toward low complexity. Residues 144-171 (DPASSVSSSPSPPFGHSAAVSPTFMPRS) form a disordered region. The interval 161-220 (AAVSPTFMPRSTQPLTFTTATFAATKFGSTKMKNSGRSSKVARTSPINLGLTVNVNDLLK) is required for interaction with CPEB3. T204 bears the Phosphothreonine mark. Residues 228-236 (VHSLYGLGL) carry the Nuclear export signal motif. The segment at 234-284 (LGLGSQQQPQPQPQQQQQQQPSSSQPPPPLPQQQQQQPQQQQQQQQQTSAL) is disordered. Low complexity-rich tracts occupy residues 238–256 (SQQQ…QPSS) and 265–280 (QQQQ…QQQQ).

This sequence belongs to the BTG family. Interacts with ERBB2. Interacts with CNOT7. Interacts with CPEB3 (via C-terminal RNA-binding region); recruits CNOT7 to CPEB3 to form a ternary complex required for mRNA deadenylation and decay. Interacts with CNOT8. Interacts with CPEB4. Post-translationally, phosphorylated on Ser and Thr residues. In terms of tissue distribution, ubiquitous.

It localises to the cytoplasm. The protein resides in the nucleus. Its function is as follows. Anti-proliferative protein; the function is mediated by association with deadenylase subunits of the CCR4-NOT complex. Mediates CPEB3-accelerated mRNA deadenylation by binding to CPEB3 and recruiting CNOT7 which leads to target mRNA deadenylation and decay. This Mus musculus (Mouse) protein is Protein Tob1 (Tob1).